The sequence spans 171 residues: KRAB domain-containing protein 4 (171 aa).

One can recognise a KRAB domain in the interval 8–79; it reads LTFKDVFVDF…DGGTPVRTCA (72 aa).

Expressed in brain, ovary, testis, prostate, tonsil, heart, bone marrow, colon, breast and kidney.

In Homo sapiens (Human), this protein is KRAB domain-containing protein 4 (KRBOX4).